A 201-amino-acid polypeptide reads, in one-letter code: Large ribosomal subunit protein uL4 (201 aa).

The segment at 51-73 (EVTGSGKKPWRQKGTGRARAGSV) is disordered.

It belongs to the universal ribosomal protein uL4 family. As to quaternary structure, part of the 50S ribosomal subunit.

Functionally, one of the primary rRNA binding proteins, this protein initially binds near the 5'-end of the 23S rRNA. It is important during the early stages of 50S assembly. It makes multiple contacts with different domains of the 23S rRNA in the assembled 50S subunit and ribosome. Its function is as follows. Forms part of the polypeptide exit tunnel. This is Large ribosomal subunit protein uL4 from Erwinia tasmaniensis (strain DSM 17950 / CFBP 7177 / CIP 109463 / NCPPB 4357 / Et1/99).